The following is a 226-amino-acid chain: Enolase-phosphatase E1 (226 aa).

This sequence belongs to the HAD-like hydrolase superfamily. MasA/MtnC family. As to quaternary structure, monomer. It depends on Mg(2+) as a cofactor.

The enzyme catalyses 5-methylsulfanyl-2,3-dioxopentyl phosphate + H2O = 1,2-dihydroxy-5-(methylsulfanyl)pent-1-en-3-one + phosphate. It functions in the pathway amino-acid biosynthesis; L-methionine biosynthesis via salvage pathway; L-methionine from S-methyl-5-thio-alpha-D-ribose 1-phosphate: step 3/6. It participates in amino-acid biosynthesis; L-methionine biosynthesis via salvage pathway; L-methionine from S-methyl-5-thio-alpha-D-ribose 1-phosphate: step 4/6. In terms of biological role, bifunctional enzyme that catalyzes the enolization of 2,3-diketo-5-methylthiopentyl-1-phosphate (DK-MTP-1-P) into the intermediate 2-hydroxy-3-keto-5-methylthiopentenyl-1-phosphate (HK-MTPenyl-1-P), which is then dephosphorylated to form the acireductone 1,2-dihydroxy-3-keto-5-methylthiopentene (DHK-MTPene). The chain is Enolase-phosphatase E1 from Shewanella baltica (strain OS155 / ATCC BAA-1091).